A 321-amino-acid polypeptide reads, in one-letter code: Chloroplastic calcium uniporter protein (321 aa).

The transit peptide at 1–56 (MSSKKSLVQSLFNISKTYSRISGLTRMRPTKSGGIPPDAGDSGIRRRFLHKRAFFS) directs the protein to the chloroplast. 2 consecutive transmembrane segments (helical) span residues 223 to 243 (LWAGLGLIMAQTVGFFRLTFW) and 249 to 269 (VMEPICFYVTSTYFMAGYAFF). Positions 247-255 (WDVMEPICF) match the Selectivity filter motif. Glu-251 is a Ca(2+) binding site.

This sequence belongs to the MCU (TC 1.A.77) family.

It is found in the plastid. The protein localises to the chloroplast membrane. It carries out the reaction Ca(2+)(in) = Ca(2+)(out). In terms of biological role, chloroplastic membrane calcium uniporter that mediates calcium uptake into chloroplast stroma. Constitutes a pore-forming and calcium-conducting subunit. Chloroplastic calcium homeostasis plays key roles in cellular physiology. Promotes calcium uptake into chloroplast stroma in response to osmotic-stress, fine-tuning cytosolic MAPK3/MAPK6 phosphorylation and affecting stomata opening. This chain is Chloroplastic calcium uniporter protein, found in Arabidopsis thaliana (Mouse-ear cress).